Consider the following 203-residue polypeptide: Histidine biosynthesis bifunctional protein HisIE (203 aa).

The phosphoribosyl-AMP cyclohydrolase stretch occupies residues 1–114; sequence MLTEQQRREL…FGDTAHQWLF (114 aa). The tract at residues 115–203 is phosphoribosyl-ATP pyrophosphohydrolase; it reads LYQLEQLLAE…VIENLRKRHQ (89 aa).

The protein in the N-terminal section; belongs to the PRA-CH family. It in the C-terminal section; belongs to the PRA-PH family.

Its subcellular location is the cytoplasm. The enzyme catalyses 1-(5-phospho-beta-D-ribosyl)-ATP + H2O = 1-(5-phospho-beta-D-ribosyl)-5'-AMP + diphosphate + H(+). It catalyses the reaction 1-(5-phospho-beta-D-ribosyl)-5'-AMP + H2O = 1-(5-phospho-beta-D-ribosyl)-5-[(5-phospho-beta-D-ribosylamino)methylideneamino]imidazole-4-carboxamide. Its pathway is amino-acid biosynthesis; L-histidine biosynthesis; L-histidine from 5-phospho-alpha-D-ribose 1-diphosphate: step 2/9. The protein operates within amino-acid biosynthesis; L-histidine biosynthesis; L-histidine from 5-phospho-alpha-D-ribose 1-diphosphate: step 3/9. This Escherichia coli O6:H1 (strain CFT073 / ATCC 700928 / UPEC) protein is Histidine biosynthesis bifunctional protein HisIE.